The sequence spans 983 residues: Protein translocase subunit SecA (983 aa).

ATP is bound by residues glutamine 83, 101–105 (GEGKT), and aspartate 489. A disordered region spans residues 948-983 (ISSEEEDNNEKTNINNNEDLERTKGEAQQTAKNPNE). The span at 973-983 (EAQQTAKNPNE) shows a compositional bias: polar residues.

Belongs to the SecA family. As to quaternary structure, monomer and homodimer. Part of the essential Sec protein translocation apparatus which comprises SecA, SecYEG and auxiliary proteins SecDF. Other proteins may also be involved.

It is found in the cell membrane. The protein resides in the cytoplasm. The enzyme catalyses ATP + H2O + cellular proteinSide 1 = ADP + phosphate + cellular proteinSide 2.. Part of the Sec protein translocase complex. Interacts with the SecYEG preprotein conducting channel. Has a central role in coupling the hydrolysis of ATP to the transfer of proteins into and across the cell membrane, serving as an ATP-driven molecular motor driving the stepwise translocation of polypeptide chains across the membrane. The polypeptide is Protein translocase subunit SecA (Mesomycoplasma hyopneumoniae (strain 232) (Mycoplasma hyopneumoniae)).